We begin with the raw amino-acid sequence, 622 residues long: Gamma tubulin complex adapter SPC72 (622 aa).

Disordered stretches follow at residues 1–58 (MVRR…PALM) and 221–263 (DKEE…IHDS). Positions 228 to 238 (LAQSSPAGSQL) are enriched in polar residues. Over residues 239–250 (ESRDSPSSKEEN) the composition is skewed to basic and acidic residues.

Homooligomer. Interacts with CDC5, KAR1, KIN4, SPC97, SPC98, STU2 and TUB4. Phosphorylated by CDC5.

The protein resides in the cytoplasm. The protein localises to the cytoskeleton. It localises to the microtubule organizing center. Its subcellular location is the spindle pole body. Spindle pole body (SPB) component that acts as the gamma-tubulin complex-binding protein of the SPB outer plaque. Anchors cytoplasmic microtubules at the half bridge of the spindle pole body (SPB) and accordingly functions in nuclear position and spindle orientation, including anaphase spindle migration into the bud. Recruits KIN4 kinase to both SPBs when cytoplasmic microtubules are defective, to delay mitotic exit. Links cytoplasmic microtubules with spindle orientation checkpoint (SPOC) components and, therefore, could function as part of the sensors of spindle orientation defects. Required for cytoplasmic astral microtubule growth during mitosis. Is strictly required for mating and karyogamy. The chain is Gamma tubulin complex adapter SPC72 (SPC72) from Saccharomyces cerevisiae (strain ATCC 204508 / S288c) (Baker's yeast).